Here is a 606-residue protein sequence, read N- to C-terminus: Putative amino acid transporter AAT1 (606 aa).

The disordered stretch occupies residues 1–156 (MNKKYGTSSN…DEEGTNKPKR (156 aa)). 2 stretches are compositionally biased toward basic and acidic residues: residues 12 to 25 (HDNK…ADKN) and 72 to 89 (SDKK…ESSK). The span at 140–149 (SDGDYTNDEE) shows a compositional bias: acidic residues. A run of 11 helical transmembrane segments spans residues 175-194 (TVLF…PYVF), 200-225 (ILSI…TSSL), 246-271 (TIID…SNFL), 283-301 (LFTN…ILPI), 313-332 (FLIF…GLQT), 352-372 (HFFK…NACF), 393-412 (VILQ…FSFL), 428-449 (VSIL…PLNF), 522-539 (MWIS…ACKV), 545-567 (VIGI…LIYY), and 579-605 (RYST…LNLI).

It belongs to the amino acid/polyamine transporter 2 family.

Its subcellular location is the vacuole membrane. In terms of biological role, putative amino acid transporter. Probably transports tryptophan. Involved in maintaining the osmotic homeostasis of the digestive vacuole. Important for the timely development and growth of the asexual-stage parasites and male gametocyte maturation. The protein is Putative amino acid transporter AAT1 of Plasmodium falciparum (isolate 3D7).